Consider the following 195-residue polypeptide: MTQNIRPLPQFKYHPKPLETGAFEQDKTVECDCCEQQTSVYYSGPFYCVDEVEHLCPWCIADGSAAEKFAGSFQDDASIEGVEFEYDEEDEFAGIKNTYPDEMLKELVERTPGYHGWQQEFWLAHCGDFCVFIGYVGWNDIKDRLDEFANLEEDCENFGIRNSDLAKCLQKGGHCQGYLFRCLHCGKLRLWGDFS.

This sequence belongs to the UPF0167 family.

In Escherichia coli (strain K12), this protein is UPF0167 protein CbrC (cbrC).